Reading from the N-terminus, the 362-residue chain is Cobalt-precorrin-5B C(1)-methyltransferase (362 aa).

This sequence belongs to the CbiD family.

The catalysed reaction is Co-precorrin-5B + S-adenosyl-L-methionine = Co-precorrin-6A + S-adenosyl-L-homocysteine. Its pathway is cofactor biosynthesis; adenosylcobalamin biosynthesis; cob(II)yrinate a,c-diamide from sirohydrochlorin (anaerobic route): step 6/10. Functionally, catalyzes the methylation of C-1 in cobalt-precorrin-5B to form cobalt-precorrin-6A. In Burkholderia thailandensis (strain ATCC 700388 / DSM 13276 / CCUG 48851 / CIP 106301 / E264), this protein is Cobalt-precorrin-5B C(1)-methyltransferase.